A 250-amino-acid chain; its full sequence is Probable E3 ubiquitin-protein ligase RHY1A (250 aa).

Residues 1–10 (MTSASELFST) show a composition bias toward polar residues. Positions 1–106 (MTSASELFST…ETQSSSFVNL (106 aa)) are disordered. Positions 29-47 (YRHHSHHHHRRHGVHHHNQ) are enriched in basic residues. The segment covering 48–58 (RHDSDGCDPLR) has biased composition (basic and acidic residues). The span at 60-69 (PTPRLRRFFH) shows a compositional bias: basic residues. A compositionally biased stretch (basic and acidic residues) spans 71–80 (PIQERSRPIR). Low complexity predominate over residues 91–102 (TDSTDTETQSSS). The segment at 203-244 (CSICLESFTKGDMLISLPCTHSFHSSCLNPWLRACGDCPCCR) adopts an RING-type; atypical zinc-finger fold.

It carries out the reaction S-ubiquitinyl-[E2 ubiquitin-conjugating enzyme]-L-cysteine + [acceptor protein]-L-lysine = [E2 ubiquitin-conjugating enzyme]-L-cysteine + N(6)-ubiquitinyl-[acceptor protein]-L-lysine.. It participates in protein modification; protein ubiquitination. Functionally, probable E3 ubiquitin-protein ligase that may possess E3 ubiquitin ligase activity in vitro. This chain is Probable E3 ubiquitin-protein ligase RHY1A, found in Arabidopsis thaliana (Mouse-ear cress).